The sequence spans 153 residues: Peritrophin-1 (153 aa).

A signal peptide spans M1–A17. 2 consecutive Chitin-binding type-2 domains span residues D18 to P79 and S92 to E153. Disulfide bonds link C56/C69 and C130/C143. Residue N63 is glycosylated (N-linked (GlcNAc...) asparagine).

In terms of processing, glycosylated. Adult peritrophic membrane.

In terms of biological role, binds chitin but not cellulose. May be involved in the spatial organization of PM. In Anopheles gambiae (African malaria mosquito), this protein is Peritrophin-1 (Aper1).